The chain runs to 584 residues: 2-succinyl-5-enolpyruvyl-6-hydroxy-3-cyclohexene-1-carboxylate synthase (584 aa).

Belongs to the TPP enzyme family. MenD subfamily. As to quaternary structure, homodimer. Requires Mg(2+) as cofactor. It depends on Mn(2+) as a cofactor. Thiamine diphosphate serves as cofactor.

It catalyses the reaction isochorismate + 2-oxoglutarate + H(+) = 5-enolpyruvoyl-6-hydroxy-2-succinyl-cyclohex-3-ene-1-carboxylate + CO2. The protein operates within quinol/quinone metabolism; 1,4-dihydroxy-2-naphthoate biosynthesis; 1,4-dihydroxy-2-naphthoate from chorismate: step 2/7. It functions in the pathway quinol/quinone metabolism; menaquinone biosynthesis. Catalyzes the thiamine diphosphate-dependent decarboxylation of 2-oxoglutarate and the subsequent addition of the resulting succinic semialdehyde-thiamine pyrophosphate anion to isochorismate to yield 2-succinyl-5-enolpyruvyl-6-hydroxy-3-cyclohexene-1-carboxylate (SEPHCHC). The polypeptide is 2-succinyl-5-enolpyruvyl-6-hydroxy-3-cyclohexene-1-carboxylate synthase (Bacillus thuringiensis subsp. konkukian (strain 97-27)).